Here is a 390-residue protein sequence, read N- to C-terminus: Chorismate synthase (390 aa).

NADP(+) contacts are provided by R39 and R45. FMN-binding positions include 132–134 (RSS), 253–254 (NA), G298, 313–317 (KPIPT), and R339.

This sequence belongs to the chorismate synthase family. Homotetramer. It depends on FMNH2 as a cofactor.

The catalysed reaction is 5-O-(1-carboxyvinyl)-3-phosphoshikimate = chorismate + phosphate. It participates in metabolic intermediate biosynthesis; chorismate biosynthesis; chorismate from D-erythrose 4-phosphate and phosphoenolpyruvate: step 7/7. Functionally, catalyzes the anti-1,4-elimination of the C-3 phosphate and the C-6 proR hydrogen from 5-enolpyruvylshikimate-3-phosphate (EPSP) to yield chorismate, which is the branch point compound that serves as the starting substrate for the three terminal pathways of aromatic amino acid biosynthesis. This reaction introduces a second double bond into the aromatic ring system. In Bacillus velezensis (strain DSM 23117 / BGSC 10A6 / LMG 26770 / FZB42) (Bacillus amyloliquefaciens subsp. plantarum), this protein is Chorismate synthase.